Here is a 131-residue protein sequence, read N- to C-terminus: UPF0102 protein AZC_4471 (131 aa).

The protein belongs to the UPF0102 family.

The sequence is that of UPF0102 protein AZC_4471 from Azorhizobium caulinodans (strain ATCC 43989 / DSM 5975 / JCM 20966 / LMG 6465 / NBRC 14845 / NCIMB 13405 / ORS 571).